We begin with the raw amino-acid sequence, 426 residues long: Pannexin-1 (426 aa).

Residues 1 to 40 (MAIAQLATEYVFSDFLLKEPTEPKFKGLRLELAVDKMVTC) are Cytoplasmic-facing. C40 carries the S-nitrosocysteine modification. A helical transmembrane segment spans residues 41–61 (IAVGLPLLLISLAFAQEISIG). Residues 62-106 (TQISCFSPSSFSWRQAAFVDSYCWAAVQQKNSLQSESGNLPLWLH) are Extracellular-facing. Intrachain disulfides connect C66–C265 and C84–C246. A helical membrane pass occupies residues 107 to 127 (KFFPYILLLFAILLYLPPLFW). At 128–217 (RFAAAPHICS…NLIIKYISCR (90 aa)) the chain is on the cytoplasmic side. Y199 carries the post-translational modification Phosphotyrosine. The chain crosses the membrane as a helical span at residues 218–238 (LLTLIIILLACIYLGYYFSLS). The Extracellular segment spans residues 239 to 266 (SLSDEFVCSIKSGILRNDSTVPDQFQCK). N-linked (GlcNAc...) asparagine glycosylation is present at N255. Residues 267-287 (LIAVGIFQLLSVINLVVYVLL) form a helical membrane-spanning segment. Residues 288-426 (APVVVYTLFV…ARQRLLDSSC (139 aa)) are Cytoplasmic-facing. C347 is subject to S-nitrosocysteine. Residues 405–414 (DSETKANNGE) show a composition bias toward polar residues. The interval 405-426 (DSETKANNGEKNARQRLLDSSC) is disordered. The segment covering 415-426 (KNARQRLLDSSC) has biased composition (basic and acidic residues).

This sequence belongs to the pannexin family. Homoheptameric. In terms of processing, S-nitrosylation inhibits channel currents and ATP release. Post-translationally, N-glycosylation plays a role in cell surface targeting. Glycosylation at its extracellular surface makes unlikely that two oligomers could dock to form an intercellular channel such as in gap junctions. Exists in three glycosylation states: non-glycosylated (GLY0), high-mannose glycosylated (GLY1), and fully mature glycosylated (GLY2). Cleaved by CASP3 and CASP7 during apoptosis. Cleavage opens the channel for the release of metabolites and induces plasma membrane permeability during apoptosis. In terms of processing, phosphorylated at Tyr-199 by SRC. Phosphorylation activates ATP release. Constitutively phosphorylated in vascular smooth muscle cells. In terms of tissue distribution, widely expressed. Highest expression is observed in oocytes and brain. Detected at very low levels in sperm cells.

The protein resides in the cell membrane. Its subcellular location is the endoplasmic reticulum membrane. The catalysed reaction is chloride(in) = chloride(out). It catalyses the reaction iodide(out) = iodide(in). It carries out the reaction ATP(in) = ATP(out). The enzyme catalyses K(+)(in) = K(+)(out). The catalysed reaction is Ca(2+)(in) = Ca(2+)(out). It catalyses the reaction Na(+)(in) = Na(+)(out). It carries out the reaction nitrate(in) = nitrate(out). The enzyme catalyses L-aspartate(out) = L-aspartate(in). The catalysed reaction is L-glutamate(out) = L-glutamate(in). It catalyses the reaction D-gluconate(in) = D-gluconate(out). It carries out the reaction spermidine(in) = spermidine(out). In terms of biological role, ion channel involved in a variety of physiological functions such as blood pressure regulation, apoptotic cell clearance and oogenesis. Forms anion-selective channels with relatively low conductance and an order of permeabilities: nitrate&gt;iodide&gt;chlroride&gt;&gt;aspartate=glutamate=gluconate. Can release ATP upon activation through phosphorylation or cleavage at C-terminus. May play a role as a Ca(2+)-leak channel to regulate ER Ca(2+) homeostasis. Its function is as follows. During apoptosis, the C terminal tail is cleaved by caspases, which opens the main pore acting as a large-pore ATP efflux channel with a broad distribution, which allows the regulated release of molecules and ions smaller than 1 kDa, such as nucleotides ATP and UTP, and selective plasma membrane permeability to attract phagocytes that engulf the dying cells. This chain is Pannexin-1, found in Homo sapiens (Human).